Here is a 236-residue protein sequence, read N- to C-terminus: Biosynthetic peptidoglycan transglycosylase (236 aa).

A helical membrane pass occupies residues 20-40 (LVFIVLSVLILPYALIGLYLL).

This sequence belongs to the glycosyltransferase 51 family.

It localises to the cell inner membrane. It catalyses the reaction [GlcNAc-(1-&gt;4)-Mur2Ac(oyl-L-Ala-gamma-D-Glu-L-Lys-D-Ala-D-Ala)](n)-di-trans,octa-cis-undecaprenyl diphosphate + beta-D-GlcNAc-(1-&gt;4)-Mur2Ac(oyl-L-Ala-gamma-D-Glu-L-Lys-D-Ala-D-Ala)-di-trans,octa-cis-undecaprenyl diphosphate = [GlcNAc-(1-&gt;4)-Mur2Ac(oyl-L-Ala-gamma-D-Glu-L-Lys-D-Ala-D-Ala)](n+1)-di-trans,octa-cis-undecaprenyl diphosphate + di-trans,octa-cis-undecaprenyl diphosphate + H(+). The protein operates within cell wall biogenesis; peptidoglycan biosynthesis. In terms of biological role, peptidoglycan polymerase that catalyzes glycan chain elongation from lipid-linked precursors. The polypeptide is Biosynthetic peptidoglycan transglycosylase (Rhizobium meliloti (strain 1021) (Ensifer meliloti)).